The sequence spans 1425 residues: Neuropathy target esterase sws (1425 aa).

Over 1–34 (MDVLEMLRASASGSYNTIFSDAWCQYVSKQITAT) the chain is Lumenal. The helical transmembrane segment at 35-55 (VYMYFALVMMSLLFIAWFLYF) threads the bilayer. Residues 56–1425 (KRMARLRLRD…RSSPNNETKN (1370 aa)) are Cytoplasmic-facing. 174–301 (IFGHFEKPVF…IRVIQVIMIR (128 aa)) is an a nucleoside 3',5'-cyclic phosphate binding site. Polar residues-rich tracts occupy residues 332–348 (TMSG…SRQA) and 357–366 (SQMNLMQSAV). Residues 332–410 (TMSGPINSQT…NPDGSFHGTT (79 aa)) are disordered. The segment covering 367–381 (SGTGSSGVSVTVTRP) has biased composition (low complexity). Phosphoserine occurs at positions 444 and 453. A nucleoside 3',5'-cyclic phosphate is bound by residues 482–609 (ELGL…VVRR) and 598–727 (IVLD…HRFL). Residues 952 to 1118 (LVLGGGGARG…VNNLPADVMH (167 aa)) form the PNPLA domain. The GXGXXG motif lies at 956–961 (GGGARG). The GXSXG motif lies at 983–987 (GVSIG). Residue Ser985 is the Nucleophile of the active site. The active-site Proton acceptor is Asp1105. Residues 1105-1107 (DGG) carry the DGA/G motif. Ser1160 carries the phosphoserine modification. Residues 1330–1425 (LERKTDKSTQ…RSSPNNETKN (96 aa)) are disordered. A compositionally biased stretch (low complexity) spans 1337–1347 (STQSSPPSNSR). Residues 1348–1358 (SDMRGKEEARH) are compositionally biased toward basic and acidic residues. Positions 1380–1403 (TKTQTGQEQELQQEQQDQGATAEQ) are enriched in low complexity. Positions 1404-1416 (LVDKDKEENKENR) are enriched in basic and acidic residues.

The protein belongs to the NTE family. Interacts with Pka-C3; interaction inhibits the catalytic function of Pka-C3 and the esterase activity of sws. In terms of tissue distribution, isoform A and isoform B are expressed in the entire brain cortex; cortical cell bodies of adult brain. Sws and Pka-C3 are colocalized in all neurons.

It is found in the endoplasmic reticulum membrane. It carries out the reaction a 1-acyl-sn-glycero-3-phosphocholine + H2O = sn-glycerol 3-phosphocholine + a fatty acid + H(+). Its function is as follows. Phospholipase B that deacylates intracellular phosphatidylcholine (PtdCho), generating glycerophosphocholine (GroPtdCho). This deacylation occurs at both sn-2 and sn-1 positions of PtdCho. Its specific chemical modification by certain organophosphorus (OP) compounds leads to distal axonopathy. Plays a role in the signaling mechanism between neurons and glia that regulates glia wrapping during development of the adult brain. Essential for membrane lipid homeostasis and cell survival in both neurons and glia of the adult brain. This chain is Neuropathy target esterase sws (sws), found in Drosophila melanogaster (Fruit fly).